The following is a 295-amino-acid chain: UDP-N-acetylenolpyruvoylglucosamine reductase (295 aa).

The FAD-binding PCMH-type domain occupies 24–188; that stretch reads KVGGNAEIFF…LKVVFKINKG (165 aa). The active site involves Arg168. Catalysis depends on Ser217, which acts as the Proton donor. Residue Glu287 is part of the active site.

Belongs to the MurB family. The cofactor is FAD.

The protein localises to the cytoplasm. It catalyses the reaction UDP-N-acetyl-alpha-D-muramate + NADP(+) = UDP-N-acetyl-3-O-(1-carboxyvinyl)-alpha-D-glucosamine + NADPH + H(+). It functions in the pathway cell wall biogenesis; peptidoglycan biosynthesis. Functionally, cell wall formation. The polypeptide is UDP-N-acetylenolpyruvoylglucosamine reductase (Rickettsia peacockii (strain Rustic)).